The sequence spans 280 residues: Tryptophan synthase alpha chain (280 aa).

Residues Glu49 and Asp60 each act as proton acceptor in the active site.

This sequence belongs to the TrpA family. In terms of assembly, tetramer of two alpha and two beta chains.

The enzyme catalyses (1S,2R)-1-C-(indol-3-yl)glycerol 3-phosphate + L-serine = D-glyceraldehyde 3-phosphate + L-tryptophan + H2O. It functions in the pathway amino-acid biosynthesis; L-tryptophan biosynthesis; L-tryptophan from chorismate: step 5/5. In terms of biological role, the alpha subunit is responsible for the aldol cleavage of indoleglycerol phosphate to indole and glyceraldehyde 3-phosphate. The polypeptide is Tryptophan synthase alpha chain (Corynebacterium efficiens (strain DSM 44549 / YS-314 / AJ 12310 / JCM 11189 / NBRC 100395)).